The sequence spans 533 residues: Probable ribonuclease ZC3H12D (533 aa).

An RNase NYN domain is found at 92 to 246 (LRPIVIDGSN…PLGRRGPTLS (155 aa)). The segment at 251–282 (KKPRPPEPSWQHCPYGKKCTYGVKCRFYHPER) adopts a C3H1-type zinc-finger fold. Positions 262-368 (HCPYGKKCTY…ASGVVSQSRG (107 aa)) are necessary for interaction with ZC3H12A. Residues 302 to 335 (LGGGAEEPRTPSARSRPTTARLLPQEPGEHDLPP) are disordered.

It belongs to the ZC3H12 family. Interacts with ZC3H12A. The cofactor is Mg(2+). Expressed at low levels in bone marrow derived macrophages.

The protein localises to the cytoplasm. The protein resides in the P-body. May regulate cell growth likely by suppressing RB1 phosphorylation. May function as RNase and regulate the levels of target RNA species (Potential). In association with ZC3H12A enhances the degradation of interleukin IL-6 mRNA level in activated macrophages. Serve as a tumor suppressor in certain leukemia cells. Overexpression inhibits the G1 to S phase progression through suppression of RB1 phosphorylation. The sequence is that of Probable ribonuclease ZC3H12D from Mus musculus (Mouse).